The primary structure comprises 31 residues: Nemertide alpha-5 (31 aa).

3 disulfides stabilise this stretch: cysteine 2–cysteine 16, cysteine 9–cysteine 20, and cysteine 15–cysteine 26. 2 positions are modified to 4-hydroxyproline: proline 28 and proline 29.

It belongs to the nemertide family. As to expression, confined to the epidermis and to the mucus layer.

The protein resides in the secreted. Functionally, highly potent toxin against both insect and some mammalian sodium channels (Nav). It potently inhibits inactivation of insect sodium channels of B.germanica (BgNav1) (EC(50)=7.8 nM) and also delays the inactivation of mammalian Nav with potent activity on Nav1.3/SCN3A and Nav1.4/SCN4A (hNav1.1/SCN1A; EC(50)=102.1 nM, rNav1.2/SCN2A; EC(50)=156.1 nM, rNav1.3/SCN3A; EC(50)=9.4 nM, rNav1.4/SCN4A; EC(50)=15.4 nM, hNav1.5/SCN5A; EC(50)=132.7 nM, mNav1.6/SCN8A; EC(50)=66.9 nM, hNav1.9/SCN9A; EC(50)=73 nM). 1 uM is enough to completely inhibits the inactivation, resulting in sustained non-inactivating currents. In addition, the toxin significantly enhances the recovery from inactivation, and the open state is not required for the toxin to interact with the channel. In vivo, injection into brine shrimp (Artemia salina) stops movement or causes death after 24 hours (EC(50)=0.4 uM). The sequence is that of Nemertide alpha-5 from Ramphogordius pseudolacteus (Ribbon worm).